A 443-amino-acid chain; its full sequence is ATP synthase subunit b-delta (443 aa).

The ATP synthase subunit b stretch occupies residues 1–168; that stretch reads MSTFIGQLIG…PSDAALDDAV (168 aa). A helical membrane pass occupies residues 4 to 24; that stretch reads FIGQLIGFAVIVFLLVRFVVP. The tract at residues 169–443 is ATP synthase subunit delta; that stretch reads GSRMRSTSRE…LASAETQLPD (275 aa).

In the N-terminal section; belongs to the ATPase B chain family. It in the C-terminal section; belongs to the ATPase delta chain family. In terms of assembly, F-type ATPases have 2 components, F(1) - the catalytic core - and F(0) - the membrane proton channel. F(1) has five subunits: alpha(3), beta(3), gamma(1), delta(1), epsilon(1). F(0) has three main subunits: a(1), b(2) and c(10-14). The alpha and beta chains form an alternating ring which encloses part of the gamma chain. F(1) is attached to F(0) by a central stalk formed by the gamma and epsilon chains, while a peripheral stalk is formed by the delta and b chains.

The protein resides in the cell membrane. In terms of biological role, f(1)F(0) ATP synthase produces ATP from ADP in the presence of a proton or sodium gradient. F-type ATPases consist of two structural domains, F(1) containing the extramembraneous catalytic core and F(0) containing the membrane proton channel, linked together by a central stalk and a peripheral stalk. During catalysis, ATP synthesis in the catalytic domain of F(1) is coupled via a rotary mechanism of the central stalk subunits to proton translocation. Functionally, this fusion protein includes a component of the F(0) channel (subunit b) and of the F(1) subunit (subunit delta). Two copies of subunit b and one of delta together form the peripheral 'stator' stalk which links F(1) to F(0). The polypeptide is ATP synthase subunit b-delta (atpFH) (Mycobacterium sp. (strain JLS)).